The following is a 225-amino-acid chain: Protein-L-isoaspartate O-methyltransferase (225 aa).

The active site involves serine 75.

It belongs to the methyltransferase superfamily. L-isoaspartyl/D-aspartyl protein methyltransferase family.

It is found in the cytoplasm. It catalyses the reaction [protein]-L-isoaspartate + S-adenosyl-L-methionine = [protein]-L-isoaspartate alpha-methyl ester + S-adenosyl-L-homocysteine. Functionally, catalyzes the methyl esterification of L-isoaspartyl residues in peptides and proteins that result from spontaneous decomposition of normal L-aspartyl and L-asparaginyl residues. It plays a role in the repair and/or degradation of damaged proteins. This chain is Protein-L-isoaspartate O-methyltransferase, found in Xanthomonas campestris pv. campestris (strain 8004).